The chain runs to 290 residues: Glycine--tRNA ligase alpha subunit (290 aa).

Belongs to the class-II aminoacyl-tRNA synthetase family. In terms of assembly, tetramer of two alpha and two beta subunits.

It is found in the cytoplasm. It carries out the reaction tRNA(Gly) + glycine + ATP = glycyl-tRNA(Gly) + AMP + diphosphate. In Zymomonas mobilis subsp. mobilis (strain ATCC 31821 / ZM4 / CP4), this protein is Glycine--tRNA ligase alpha subunit.